Reading from the N-terminus, the 348-residue chain is Fasciculation and elongation protein zeta-2 (348 aa).

A disordered region spans residues 11 to 40 (YEFQEPAGSVQEQENCNASPEAGAGAHAGG). Phosphoserine occurs at positions 130, 171, and 190. The stretch at 206 to 280 (ERVKRLSVSE…TAKKKKKLKS (75 aa)) forms a coiled coil. Residues 265 to 296 (QKEHKETAKKKKKLKSGSSQNGRSERSHMPGT) are disordered.

It belongs to the zygin family. As to quaternary structure, homodimer; disulfide-linked. May form heterodimers with FEZ1. Interacts with synaptotagmin.

Involved in axonal outgrowth and fasciculation. The sequence is that of Fasciculation and elongation protein zeta-2 (Fez2) from Mus musculus (Mouse).